We begin with the raw amino-acid sequence, 224 residues long: 2,5-diamino-6-ribosylamino-4(3H)-pyrimidinone 5'-phosphate reductase (224 aa).

Residues T57, D61, 82-85 (STAN), V131, and 153-156 (GASI) each bind NADP(+).

Belongs to the HTP reductase family. As to quaternary structure, homodimer.

The catalysed reaction is 2,5-diamino-6-(1-D-ribitylamino)pyrimidin-4(3H)-one 5'-phosphate + NADP(+) = 2,5-diamino-6-(1-D-ribosylamino)pyrimidin-4(3H)-one 5'-phosphate + NADPH + H(+). It catalyses the reaction 2,5-diamino-6-(1-D-ribitylamino)pyrimidin-4(3H)-one 5'-phosphate + NAD(+) = 2,5-diamino-6-(1-D-ribosylamino)pyrimidin-4(3H)-one 5'-phosphate + NADH + H(+). It functions in the pathway cofactor biosynthesis; riboflavin biosynthesis. Catalyzes an early step in riboflavin biosynthesis, the NADPH-dependent reduction of the ribose side chain of 2,5-diamino-6-ribosylamino-4(3H)-pyrimidinone 5'-phosphate, yielding 2,5-diamino-6-ribitylamino-4(3H)-pyrimidinone 5'-phosphate. In Aquifex aeolicus (strain VF5), this protein is 2,5-diamino-6-ribosylamino-4(3H)-pyrimidinone 5'-phosphate reductase (ribD2).